The chain runs to 55 residues: Chromatin protein Cren7 (55 aa).

The protein belongs to the Cren7 family. Monomer. Methylated at multiple sites, to varying extents.

The protein localises to the chromosome. Its subcellular location is the cytoplasm. Functionally, a chromatin protein, binds double-stranded DNA without sequence specificity. Constrains negative DNA supercoils. The chain is Chromatin protein Cren7 from Ignicoccus hospitalis (strain KIN4/I / DSM 18386 / JCM 14125).